The sequence spans 613 residues: Portal protein (613 aa).

Residues 577–613 form a disordered region; the sequence is ATGGDHGIRQAPSARGDAEPDHAKSKPARDPPPGAGS. Residues 592–605 are compositionally biased toward basic and acidic residues; the sequence is GDAEPDHAKSKPAR.

The protein belongs to the herpesviridae portal protein family. As to quaternary structure, homododecamerizes. Interacts with terminase subunits TRM1 and TRM3.

It localises to the virion. The protein localises to the host nucleus. Forms a portal in the viral capsid through which viral DNA is translocated during DNA packaging. Assembles as a dodecamer at a single fivefold axe of the T=16 icosahedric capsid. Binds to the molecular motor that translocates the viral DNA, termed terminase. The protein is Portal protein of Homo sapiens (Human).